A 208-amino-acid chain; its full sequence is Holliday junction resolvase RecU (208 aa).

The tract at residues Met1–Gly30 is disordered. The Mg(2+) site is built by Thr87, Asp89, Glu102, and Gln121.

It belongs to the RecU family. Mg(2+) serves as cofactor.

The protein resides in the cytoplasm. It catalyses the reaction Endonucleolytic cleavage at a junction such as a reciprocal single-stranded crossover between two homologous DNA duplexes (Holliday junction).. Functionally, endonuclease that resolves Holliday junction intermediates in genetic recombination. Cleaves mobile four-strand junctions by introducing symmetrical nicks in paired strands. Promotes annealing of linear ssDNA with homologous dsDNA. Required for DNA repair, homologous recombination and chromosome segregation. The chain is Holliday junction resolvase RecU from Staphylococcus saprophyticus subsp. saprophyticus (strain ATCC 15305 / DSM 20229 / NCIMB 8711 / NCTC 7292 / S-41).